The primary structure comprises 116 residues: HVA22-like protein e (116 aa).

Transmembrane regions (helical) follow at residues 12 to 32 (HSLA…VIAI), 42 to 62 (QWLA…ILQS), and 63 to 83 (LLEW…WLVL).

Belongs to the DP1 family. As to expression, predominantly expressed in stem.

The protein localises to the membrane. The sequence is that of HVA22-like protein e (HVA22E) from Arabidopsis thaliana (Mouse-ear cress).